Reading from the N-terminus, the 142-residue chain is Phosphoribosyl-AMP cyclohydrolase (142 aa).

Aspartate 92 serves as a coordination point for Mg(2+). Cysteine 93 is a Zn(2+) binding site. 2 residues coordinate Mg(2+): aspartate 94 and aspartate 96. Zn(2+)-binding residues include cysteine 109 and cysteine 116.

The protein belongs to the PRA-CH family. In terms of assembly, homodimer. Requires Mg(2+) as cofactor. Zn(2+) serves as cofactor.

It is found in the cytoplasm. The catalysed reaction is 1-(5-phospho-beta-D-ribosyl)-5'-AMP + H2O = 1-(5-phospho-beta-D-ribosyl)-5-[(5-phospho-beta-D-ribosylamino)methylideneamino]imidazole-4-carboxamide. Its pathway is amino-acid biosynthesis; L-histidine biosynthesis; L-histidine from 5-phospho-alpha-D-ribose 1-diphosphate: step 3/9. Functionally, catalyzes the hydrolysis of the adenine ring of phosphoribosyl-AMP. This Halorhodospira halophila (strain DSM 244 / SL1) (Ectothiorhodospira halophila (strain DSM 244 / SL1)) protein is Phosphoribosyl-AMP cyclohydrolase.